Here is a 156-residue protein sequence, read N- to C-terminus: MKIVSTLLGELEFEEEDIIMFPAGIPAFEQEKSFLLIAMGEGVPFYYLQSALNPELCLVVANPFAFFPRYSIEIGQEELQRLDCSQREELLLYVILTVPQDFRESTANLVAPLIINQESKKGLQFIATNSDYTTRHPIFQPTQAEEQTGIAAAEEG.

This sequence belongs to the FliW family. As to quaternary structure, interacts with translational regulator CsrA and flagellin(s).

Its subcellular location is the cytoplasm. Its function is as follows. Acts as an anti-CsrA protein, binds CsrA and prevents it from repressing translation of its target genes, one of which is flagellin. Binds to flagellin and participates in the assembly of the flagellum. The chain is Flagellar assembly factor FliW from Syntrophomonas wolfei subsp. wolfei (strain DSM 2245B / Goettingen).